The chain runs to 617 residues: Pentatricopeptide repeat-containing protein At4g18520, chloroplastic (617 aa).

A chloroplast-targeting transit peptide spans methionine 1–threonine 19. 14 PPR repeats span residues valine 116 to lysine 146, asparagine 147 to phenylalanine 181, asparagine 183 to asparagine 217, serine 222 to lysine 247, aspartate 248 to proline 282, asparagine 283 to threonine 317, aspartate 318 to arginine 348, asparagine 349 to alanine 383, asparagine 384 to lysine 418, asparagine 419 to arginine 449, aspartate 450 to proline 484, asparagine 485 to serine 519, asparagine 520 to lysine 550, and asparagine 551 to valine 585.

It belongs to the PPR family. PCMP-A subfamily. As to quaternary structure, interacts with MORF8/RIP1, MORF2/RIP2 and MORF9/RIP9. As to expression, expressed specifically in aerial greening tissues, such as cotyledons, rosette leaves, cauline leaves, stems, sepals, stamens, carpels and siliques.

Its subcellular location is the plastid. It is found in the chloroplast. Functionally, required for proper chloroplast development. Involved in the regulation of plastid gene expression probably through regulation of plastid-encoded polymerase (PEP) dependent chloroplast transcription. Required for RNA editing of several chloroplastic transcripts, especially accD transcripts. Required for processing of the chloroplastic rpoA pre-mRNA. Required for the monocistronic rpoA transcript processing from the rpl23-rpl2-rps19-rpl22-rps3-rpl16-rpl14-rps8-rpl36-rps11-rpoA polycistron. Binds the intergenic sequence of rps11-rpoA for rpoA monocistronic RNA cleavage. In Arabidopsis thaliana (Mouse-ear cress), this protein is Pentatricopeptide repeat-containing protein At4g18520, chloroplastic (PCMP-A2).